A 732-amino-acid polypeptide reads, in one-letter code: Catalase-peroxidase (732 aa).

Residues Met1–Pro29 form a disordered region. Positions Trp96 to Tyr223 form a cross-link, tryptophyl-tyrosyl-methioninium (Trp-Tyr) (with M-249). His97 serves as the catalytic Proton acceptor. The segment at residues Tyr223–Met249 is a cross-link (tryptophyl-tyrosyl-methioninium (Tyr-Met) (with W-96)). Position 264 (His264) interacts with heme b.

The protein belongs to the peroxidase family. Peroxidase/catalase subfamily. In terms of assembly, homodimer or homotetramer. Heme b serves as cofactor. Formation of the three residue Trp-Tyr-Met cross-link is important for the catalase, but not the peroxidase activity of the enzyme.

The catalysed reaction is H2O2 + AH2 = A + 2 H2O. It carries out the reaction 2 H2O2 = O2 + 2 H2O. In terms of biological role, bifunctional enzyme with both catalase and broad-spectrum peroxidase activity. The protein is Catalase-peroxidase of Serratia proteamaculans (strain 568).